The following is a 2060-amino-acid chain: Unconventional myosin-X (2060 aa).

Position 1 is an N-acetylmethionine (Met1). The Myosin motor domain maps to 63–739 (EGVDDMASLT…LEQKLEKRRE (677 aa)). ATP-binding positions include Asn104, Tyr113, 160–165 (GAGKTE), and Asn215. The interval 619-641 (LHSLMATLSSSNPFFVRCIKPNT) is actin-binding. IQ domains lie at 742–771 (IDRAAMVIRAHILGYLARKQYRKVLCGVVT), 765–794 (VLCGVVTIQKNYRAFLARKRFLHLKKAAIV), and 788–817 (LKKAAIVFQKQLRGRLARKVYRQLLAEKRE). Positions 814-882 (EKRELEERKR…LTRELEKQRE (69 aa)) are SAH. The stretch at 883–933 (NKQVEEILRLEKEIEDLQRMKEQQELSLTEASLQKLQQLRDEELRRLEDEA) forms a coiled coil. A phosphoserine mark is found at Ser961, Ser964, and Ser967. Disordered regions lie at residues 971 to 1039 (SELA…PYMN) and 1064 to 1088 (SLHNSSSGESTYCMPQNNGDLPSPD). Over residues 991 to 1005 (PEEEVDEGFEADDDA) the composition is skewed to acidic residues. A compositionally biased stretch (polar residues) spans 1064 to 1083 (SLHNSSSGESTYCMPQNNGD). Thr1160 is subject to Phosphothreonine. PH domains lie at 1214 to 1312 (EALK…QVHS) and 1394 to 1499 (EFIV…NVTD). The 149-residue stretch at 1549 to 1697 (LPYGDINLNL…PSRDEIEALI (149 aa)) folds into the MyTH4 domain. Residues 1702 to 2046 (MTSTVYCHGG…AYISMIVKKR (345 aa)) enclose the FERM domain.

Belongs to the TRAFAC class myosin-kinesin ATPase superfamily. Myosin family. As to quaternary structure, monomer, when in an inactive conformation in the cytosol. Homodimer in its active, membrane-bound conformation; antiparallel coiled coil-mediated dimer formation. Interacts with ECPAS. Interacts with DCC and ITGB5; the presence of DCC inhibits ITGB5 binding. Interacts with tubulin; ITGB5 or DCC binding inhibits tubulin binding. Interacts strongly with CALM3 and weakly with CALM, the CALM3 interaction is essential for function in filopodial extension and motility. Interacts with ITGB1, ITGB3 and ITGB5. Interacts with NEO1. Interacts with VASP.

It localises to the cytoplasm. Its subcellular location is the cytosol. The protein localises to the cell projection. It is found in the lamellipodium. The protein resides in the ruffle. It localises to the cytoskeleton. Its subcellular location is the filopodium tip. The protein localises to the cell cortex. It is found in the filopodium membrane. The protein resides in the cell membrane. Myosins are actin-based motor molecules with ATPase activity. Unconventional myosins serve in intracellular movements. MYO10 binds to actin filaments and actin bundles and functions as a plus end-directed motor. Moves with higher velocity and takes larger steps on actin bundles than on single actin filaments. The tail domain binds to membranous compartments containing phosphatidylinositol 3,4,5-trisphosphate or integrins, and mediates cargo transport along actin filaments. Regulates cell shape, cell spreading and cell adhesion. Stimulates the formation and elongation of filopodia. In hippocampal neurons it induces the formation of dendritic filopodia by trafficking the actin-remodeling protein VASP to the tips of filopodia, where it promotes actin elongation. Plays a role in formation of the podosome belt in osteoclasts. The protein is Unconventional myosin-X (Myo10) of Rattus norvegicus (Rat).